Reading from the N-terminus, the 691-residue chain is DNA ligase (691 aa).

NAD(+) is bound by residues 41–45 (DAEYD), 90–91 (SL), and E130. K132 (N6-AMP-lysine intermediate) is an active-site residue. NAD(+) contacts are provided by R153, E190, K307, and K331. C425, C428, C443, and C449 together coordinate Zn(2+). In terms of domain architecture, BRCT spans 610–691 (APQGVLAGKT…MHKLLEGHAR (82 aa)).

The protein belongs to the NAD-dependent DNA ligase family. LigA subfamily. Mg(2+) serves as cofactor. Requires Mn(2+) as cofactor.

It carries out the reaction NAD(+) + (deoxyribonucleotide)n-3'-hydroxyl + 5'-phospho-(deoxyribonucleotide)m = (deoxyribonucleotide)n+m + AMP + beta-nicotinamide D-nucleotide.. DNA ligase that catalyzes the formation of phosphodiester linkages between 5'-phosphoryl and 3'-hydroxyl groups in double-stranded DNA using NAD as a coenzyme and as the energy source for the reaction. It is essential for DNA replication and repair of damaged DNA. The chain is DNA ligase from Burkholderia thailandensis (strain ATCC 700388 / DSM 13276 / CCUG 48851 / CIP 106301 / E264).